Here is a 512-residue protein sequence, read N- to C-terminus: Gustatory and odorant receptor 63a (512 aa).

Residues 1–24 (MRPSGEKVVKGHGQGNSGHSLSGM) are disordered. Residues 1–129 (MRPSGEKVVK…PARAKFEMNS (129 aa)) are Cytoplasmic-facing. A helical transmembrane segment spans residues 130 to 150 (ASFIYSVVFFVLLACYVGYVA). Residues 151–166 (NNRIHIVRSLSGPFEE) lie on the Extracellular side of the membrane. A helical transmembrane segment spans residues 167 to 187 (AVIAYLFLVNILPIMIIPILW). At 188 to 222 (YEARKIAKLFNDWDDFEVLYYQISGHSLPLKLRQK) the chain is on the cytoplasmic side. A helical membrane pass occupies residues 223-243 (AVYIAIVLPILSVLSVVITHV). Topologically, residues 244–265 (TMSDLNINQVVPYCILDNLTAM) are extracellular. N261 is a glycosylation site (N-linked (GlcNAc...) asparagine). Residues 266–285 (LGAWWFLICEAMSITAHLLA) traverse the membrane as a helical segment. The Cytoplasmic segment spans residues 286–324 (ERFQKALKHIGPAAMVADYRVLWLRLSKLTRDTGNALCY). Residues 325-345 (TFVFMSLYLFFIITLSIYGLM) traverse the membrane as a helical segment. At 346–350 (SQLSE) the chain is on the extracellular side. The chain crosses the membrane as a helical span at residues 351–371 (GFGIKDIGLTITALWNIGLLF). The Cytoplasmic portion of the chain corresponds to 372 to 436 (YICDEAHYAS…FFDVNRTLFK (65 aa)). A helical membrane pass occupies residues 437–457 (GLLTTMVTYLVVLLQFQISIP). Residues 458-512 (TDKGDSEGANNITVVDFVMDSLDNDMSLMGASTLSTTTVGTTLPPPIMKLKGRKG) are Extracellular-facing. The N-linked (GlcNAc...) asparagine glycan is linked to N468.

Belongs to the insect chemoreceptor superfamily. Gustatory receptor (GR) family. Gr21a subfamily. In terms of assembly, gr21a and Gr63a probably form a heterodimer that responds to CO(2). As to expression, expressed in the medial aspect of the third antennal segment. Carbon dioxide-responsive neurons coexpress Gr21a and Gr63a in a pair of chemosensory receptors at both larval and adult life stages.

It is found in the cell membrane. Functionally, gustatory and odorant receptor which mediates acceptance or avoidance behavior, depending on its substrates. Gr21a and Gr63a together are sufficient for carbon dioxide detection and avoidance behavior. It is possible that the CO(2) receptors Gr63a and Gr21a activate the TRPC channels through Galpha49B and Plc21C. This innate olfactory avoidance behavior can be inhibited by inhibitory interactions of the odors such as 1-hexanol and 2,3-butanedione with Gr21a and Gr63a. In Drosophila melanogaster (Fruit fly), this protein is Gustatory and odorant receptor 63a (Gr63a).